Reading from the N-terminus, the 801-residue chain is Conserved oligomeric Golgi complex subunit 4 (801 aa).

A disordered region spans residues 397 to 427 (IRSPSGDGDDEENEEARQERHRLRKEAKEQK).

The protein belongs to the COG4 family. Component of the conserved oligomeric Golgi complex which is composed of eight different subunits and is required for normal Golgi morphology and localization.

It is found in the golgi apparatus membrane. Its function is as follows. Required for normal Golgi function. The chain is Conserved oligomeric Golgi complex subunit 4 (cogc-4) from Caenorhabditis elegans.